The sequence spans 461 residues: MDILFRIRGGFDLAFQLAPPKEMFIKNALRQVLSDLTTKLSSDALVLRVCNSSVYLWPNSDANTGELTDSSACKNVVRFIQFDQEEDTKRKFIKKKDKKLTDTQQIVNIDLMLEISTPLGAVTPILERENEEHHYINMSLPIDAVVSVAPEESWGKVRKLLVDAILRQLVDVEKCILRYMKGTSIVVPEPLHFQLPGKKNLVTVLYPSGIPDDQLQAYRKELHDLFNLPHDRPYFKRINAYHFPDELYKDGYIRNPHTYLSPPNIEGSMICVVQGTYAYHHYMQDRIDDNGWGCAYRSLQTICSWFRHQGYTERSIPTHREIQQALVDAGDKPATFVGSRQWIGSIEVQMVLNQLIGVTSKILFVNQGSEMASQGRELANHFQNVGTPVMVGGGVLAHTILGVAWNETTGQIKFLILDPHYTGAEDLQVMLEKGWCGWKSPDFWNKDAYYNLCLPQRPNAL.

Residues cysteine 294, aspartate 418, and histidine 420 contribute to the active site.

Belongs to the peptidase C78 family. Expressed at high level in brain, kidney, stomach, skeletal muscle, liver, pancreas, spleen and testis.

The protein resides in the endoplasmic reticulum. It is found in the cytoplasm. The protein localises to the nucleus. Functionally, thiol-dependent isopeptidase that specifically cleaves UFM1, a ubiquitin-like modifier protein, from conjugated proteins, such as CD274/PD-L1, CYB5R3, DDRGK1, MRE11, RPL26/uL24, TRIP4 and RPL26/uL24. While it is also able to mediate the processing of UFM1 precursors, a prerequisite for conjugation reactions, UFSP2 mainly acts as a protein deUFMylase that mediates deconjugation of UFM1 from target proteins. Mediates deUFMylation of RPL26/uL24, a critical step to release the UFM1 ribosome E3 ligase (UREL) complex during the recycling of 60S ribosome subunits from the endoplasmic reticulum. Catalyzes deUFMylation of TRIP4, regulating intracellular nuclear receptors transactivation and thereby regulate cell proliferation and differentiation. In Mus musculus (Mouse), this protein is Ufm1-specific protease 2.